A 121-amino-acid polypeptide reads, in one-letter code: Small ribosomal subunit protein uS13 (121 aa).

A disordered region spans residues 91 to 121 (HRRGLPVRGQNTKNNARTRKGPSKTVAGKKK). The segment covering 106–121 (ARTRKGPSKTVAGKKK) has biased composition (basic residues).

It belongs to the universal ribosomal protein uS13 family. In terms of assembly, part of the 30S ribosomal subunit. Forms a loose heterodimer with protein S19. Forms two bridges to the 50S subunit in the 70S ribosome.

In terms of biological role, located at the top of the head of the 30S subunit, it contacts several helices of the 16S rRNA. In the 70S ribosome it contacts the 23S rRNA (bridge B1a) and protein L5 of the 50S subunit (bridge B1b), connecting the 2 subunits; these bridges are implicated in subunit movement. Contacts the tRNAs in the A and P-sites. In Listeria welshimeri serovar 6b (strain ATCC 35897 / DSM 20650 / CCUG 15529 / CIP 8149 / NCTC 11857 / SLCC 5334 / V8), this protein is Small ribosomal subunit protein uS13.